Reading from the N-terminus, the 281-residue chain is Probable endonuclease 4 (281 aa).

Residues H69, H109, E145, D179, H182, H216, D229, H231, and E261 each coordinate Zn(2+).

Belongs to the AP endonuclease 2 family. Zn(2+) is required as a cofactor.

It carries out the reaction Endonucleolytic cleavage to 5'-phosphooligonucleotide end-products.. Functionally, endonuclease IV plays a role in DNA repair. It cleaves phosphodiester bonds at apurinic or apyrimidinic (AP) sites, generating a 3'-hydroxyl group and a 5'-terminal sugar phosphate. The polypeptide is Probable endonuclease 4 (Aeromonas salmonicida (strain A449)).